Consider the following 154-residue polypeptide: Large ribosomal subunit protein uL13 (154 aa).

Belongs to the universal ribosomal protein uL13 family. In terms of assembly, part of the 50S ribosomal subunit.

In terms of biological role, this protein is one of the early assembly proteins of the 50S ribosomal subunit, although it is not seen to bind rRNA by itself. It is important during the early stages of 50S assembly. The sequence is that of Large ribosomal subunit protein uL13 from Rhodopseudomonas palustris (strain ATCC BAA-98 / CGA009).